The following is a 654-amino-acid chain: MDLHTAVYNAAHDGKLPLLQKLLASRGREELEELLGEVAGGGTPLLIAARRGHLDVVEYLVDHCGASVEASGSVHFDGETIEGAPPLWAASAAGHLAVVRSLLHRGASVNRTTCTNSTPLRAACFNGHLDVVRCLVGEHKADLEVANRHGHTCLMISCYKGHREIARYLLERGAQVNRRSAKGNTALHDCAESGSLEILQLLLSCHARMERDGYGMTPLLAASITGHTNIVEYLIQEQPSHEQLSGTELPGEGSSQMAGNHCSTPEDAEQYESCCPTSREAAVEALELLGATYVDKKRDLLGALKHWRRAMELRHQGGGFLPKPEPQQLVLAYDYSREVTTPQELEALITDPDEMRMQALLIRERILGPSHPDTSYYIRYRGAVYADSGNFERCIRLWKYALDMQQNNLEPLSPMTASSFLSFAELFSYVLQDHSAKGNLGMQLDFADLIGVLSKGVREVERALQLPKEPDDSAQFTKAIAIILHLLYLLEKVECTPRQEHLKHQTVYRLLKCAPRGKNGFTPLHMAVDKETTNVGQYHVGVFPSLQVVKVLLDCGADPDSRDFDNNSPLHIAAQNNCPAIMDALIEAGAHMDATNTFKKTAYELLDSKLLAKSTVQPFNYVTLQCLAARALDRNKVPYKGFIPEELEAFIQLH.

ANK repeat units follow at residues 2 to 31 (DLHTAVYNAAHDGKLPLLQKLLASRGREEL), 40 to 70 (GGGTPLLIAARRGHLDVVEYLVDHCGASVEA), 82 to 111 (EGAPPLWAASAAGHLAVVRSLLHRGASVNR), 115 to 145 (TNSTPLRAACFNGHLDVVRCLVGEHKADLEV), 149 to 178 (HGHTCLMISCYKGHREIARYLLERGAQVNR), 182 to 211 (KGNTALHDCAESGSLEILQLLLSCHARMER), and 214 to 243 (YGMTPLLAASITGHTNIVEYLIQEQPSHEQ). Ser-108 carries the post-translational modification Phosphoserine. Residues 241–265 (HEQLSGTELPGEGSSQMAGNHCSTP) form a disordered region. Residues 253-263 (GSSQMAGNHCS) show a composition bias toward polar residues. TPR repeat units follow at residues 283-317 (VEALELLGATYVDKKRDLLGALKHWRRAMELRHQG) and 375-408 (SYYIRYRGAVYADSGNFERCIRLWKYALDMQQNN). ANK repeat units follow at residues 519-561 (NGFT…DPDS) and 565-594 (DNNSPLHIAAQNNCPAIMDALIEAGAHMDA). Ser-608 is subject to Phosphoserine.

Belongs to the fem-1 family. Component of a CRL2 E3 ubiquitin-protein ligase complex, also named ECS (Elongin BC-CUL2/5-SOCS-box protein) complex, composed of CUL2, Elongin BC (ELOB and ELOC), RBX1 and substrate-specific adapter FEM1A.

Its subcellular location is the mitochondrion. It localises to the cytoplasm. Its pathway is protein modification; protein ubiquitination. In terms of biological role, substrate-recognition component of a Cul2-RING (CRL2) E3 ubiquitin-protein ligase complex of the DesCEND (destruction via C-end degrons) pathway, which recognizes a C-degron located at the extreme C terminus of target proteins, leading to their ubiquitination and degradation. The C-degron recognized by the DesCEND pathway is usually a motif of less than ten residues and can be present in full-length proteins, truncated proteins or proteolytically cleaved forms. The CRL2(FEM1A) complex specifically recognizes proteins with an arginine at the C-terminus: recognizes and binds proteins ending with -Lys/Arg-Xaa-Arg and -Lys/Arg-Xaa-Xaa-Arg C-degrons, such as SIL1 or OR51B2, leading to their ubiquitination and degradation. The polypeptide is Protein fem-1 homolog A-like (Mus musculus (Mouse)).